Reading from the N-terminus, the 175-residue chain is DM domain-containing protein mab-23 (175 aa).

The segment at residues 8–56 (CQLCANHGIFNQPKKGHKQKCPYRTCPCSLCALNTKRRALDQIERQLKH) is a DNA-binding region (DM). The interval 58–93 (NEPMTGQTATSMASPTPECPLSPTTPKMTPHTPTSG) is disordered. Residues 59–71 (EPMTGQTATSMAS) are compositionally biased toward polar residues. The segment covering 81 to 91 (TTPKMTPHTPT) has biased composition (low complexity).

Expressed in a limited number of non-sex-specific tissues in males, including 6-8 unidentified neurons of the head, ventral body wall muscle, and the PHCL/R neurons.

The protein resides in the nucleus. Probable transcription factor that plays a role in the development of the dopaminergic neurons of the male-specific genital sensilla (simple sense organs) known as rays, by negatively regulating the activity of the transcription factor ast-1. Involved in male mating behavior, probably as a result of a role in the differentiation of male-specific diagonal muscles. Required for development of the male proctodeum. May be dispensable in hermaphrodites. The chain is DM domain-containing protein mab-23 from Caenorhabditis elegans.